The chain runs to 313 residues: UPF0761 membrane protein VV1_0885 (313 aa).

The next 6 helical transmembrane spans lie at 41–61, 104–124, 139–159, 185–205, 215–235, and 249–269; these read YLAYITLLSIVPMLTVLLSIL, MTAVGAAFLFVAALMLISNID, AVFSFSMYWMVLTLGPILVGA, LLRWLPFILSSSAFVGLYLLV, AVVGAMIAAVLFELSKKGFAA, and ALAAIPILFVWVYLCWLIVLI. A disordered region spans residues 294–313; that stretch reads PNNDTELEKDTQRDRFDSES. Residues 299 to 313 show a composition bias toward basic and acidic residues; that stretch reads ELEKDTQRDRFDSES.

It belongs to the UPF0761 family.

It localises to the cell inner membrane. This Vibrio vulnificus (strain CMCP6) protein is UPF0761 membrane protein VV1_0885.